Reading from the N-terminus, the 850-residue chain is Adenylate cyclase (850 aa).

The tract at residues 1-535 (MYLYIETLKQ…DISHHFPLRL (535 aa)) is catalytic. A regulatory region spans residues 541–850 (KALYSPCEIR…SLPTKQCQLH (310 aa)).

This sequence belongs to the adenylyl cyclase class-1 family.

It localises to the cytoplasm. It catalyses the reaction ATP = 3',5'-cyclic AMP + diphosphate. Its activity is regulated as follows. The regulatory domain is involved in the regulation of cyclase activity by the carbon source. The polypeptide is Adenylate cyclase (cya) (Yersinia pestis).